Here is a 179-residue protein sequence, read N- to C-terminus: UPF0227 protein Shewmr4_1727 (179 aa).

It belongs to the UPF0227 family.

The chain is UPF0227 protein Shewmr4_1727 from Shewanella sp. (strain MR-4).